The primary structure comprises 390 residues: 5-hydroxytryptamine receptor 1B (390 aa).

The disordered stretch occupies residues 1-21 (MEETGAQCAPPPPAGSQTGVS). At 1-46 (MEETGAQCAPPPPAGSQTGVSQVNLSAAPSHNCSTEGYVYQDSVAL) the chain is on the extracellular side. N-linked (GlcNAc...) asparagine glycosylation is found at Asn-24 and Asn-32. Residues 47-72 (PWKVLLVVLLALITLATTLSNAFVIA) form a helical membrane-spanning segment. Residues 73-86 (TVYRTRKLHTPANY) are Cytoplasmic-facing. A helical transmembrane segment spans residues 87–111 (LIASLAVTDLLVSILVMPISTMYVV). Residues 112-119 (TGRWTLGQ) lie on the Extracellular side of the membrane. The helical transmembrane segment at 120–145 (VVCDFWLSSDITCCTASILHLCVIAL) threads the bilayer. The cysteines at positions 122 and 199 are disulfide-linked. The ergotamine site is built by Asp-129 and Thr-134. The DRY motif; important for ligand-induced conformation changes and signaling signature appears at 146–148 (DRY). Residues 146 to 165 (DRYWAITDAVEYSAKRTPKR) lie on the Cytoplasmic side of the membrane. Residues 166-184 (AAVMIALVWVFSISISLPP) traverse the membrane as a helical segment. Topologically, residues 185 to 205 (FFWRQAKAEEEVLDCLVNTDH) are extracellular. Residue Val-201 participates in ergotamine binding. Residues 206-229 (ILYTVYSTVGAFYFPTLLLIALYS) traverse the membrane as a helical segment. Topologically, residues 230–315 (RIYVEARSRI…AARERKATKT (86 aa)) are cytoplasmic. The interval 251–282 (LTRAQLMTDSPGSTSSVTSINSRAPDVPSESG) is disordered. A compositionally biased stretch (polar residues) spans 255-272 (QLMTDSPGSTSSVTSINS). The helical transmembrane segment at 316–337 (LGIILGAFIVCWLPFFIISLVM) threads the bilayer. The Extracellular segment spans residues 338 to 347 (PICKDACWFH). The helical transmembrane segment at 348–370 (LAIFDFFTWLGYLNSLINPIIYT) threads the bilayer. Positions 365 to 369 (NPIIY) match the NPxxY motif; important for ligand-induced conformation changes and signaling motif. Residues 371 to 390 (MSNEDFKQAFHKLIRFKCAS) are Cytoplasmic-facing. Cys-388 is lipidated: S-palmitoyl cysteine.

The protein belongs to the G-protein coupled receptor 1 family. In terms of assembly, homodimer. Heterodimer with HTR1D. In terms of processing, phosphorylated. Desensitization of the receptor may be mediated by its phosphorylation. Palmitoylated.

The protein resides in the cell membrane. Functionally, G-protein coupled receptor for 5-hydroxytryptamine (serotonin). Also functions as a receptor for ergot alkaloid derivatives, various anxiolytic and antidepressant drugs and other psychoactive substances, such as lysergic acid diethylamide (LSD). Ligand binding causes a conformation change that triggers signaling via guanine nucleotide-binding proteins (G proteins) and modulates the activity of downstream effectors, such as adenylate cyclase. HTR1B is coupled to G(i)/G(o) G alpha proteins and mediates inhibitory neurotransmission by inhibiting adenylate cyclase activity. Arrestin family members inhibit signaling via G proteins and mediate activation of alternative signaling pathways. Regulates the release of 5-hydroxytryptamine, dopamine and acetylcholine in the brain, and thereby affects neural activity, nociceptive processing, pain perception, mood and behavior. Besides, plays a role in vasoconstriction of cerebral arteries. This chain is 5-hydroxytryptamine receptor 1B (HTR1B), found in Equus caballus (Horse).